The chain runs to 1677 residues: Vitellogenin (1677 aa).

The signal sequence occupies residues 1–8; sequence LTIALVGS. Residues 17-655 enclose the Vitellogenin domain; that stretch reads FSGSKTYQYK…NAASILPSAV (639 aa). Disordered stretches follow at residues 1089–1232 and 1252–1280; these read TLRG…SEEI and FQNK…SKQD. Residues 1098 to 1122 show a composition bias toward low complexity; the sequence is SSSSSSSSSSSSSSSSSSSSSSQQS. Basic and acidic residues predominate over residues 1123–1145; that stretch reads RMEKRMEQDKLTENLERDRDHMR. Low complexity predominate over residues 1169 to 1196; it reads SSSSSSSSSSSGSNSSSSSSSSSSSSSR. Asn1182, Asn1202, Asn1217, and Asn1218 each carry an N-linked (GlcNAc...) asparagine glycan. A compositionally biased stretch (basic residues) spans 1197-1212; sequence SHNHRNNTRTLSKSKR. Composition is skewed to low complexity over residues 1215–1229 and 1260–1273; these read NNNN…SSSS and SSSS…SSQS. The VWFD domain maps to 1490-1675; it reads SKCVAQENKF…TATEAASFCV (186 aa). 2 disulfides stabilise this stretch: Cys1492–Cys1631 and Cys1515–Cys1674. The span at 1636–1649 shows a compositional bias: basic and acidic residues; the sequence is GERRKEFRMPDGRQ. The tract at residues 1636 to 1659 is disordered; sequence GERRKEFRMPDGRQARGPSVSPTP.

Phosvitin, an egg yolk storage protein, is one of the most highly phosphorylated (10%) proteins in nature. As to expression, found in liver, testis and undifferentiated gonads of estrogen-treated fish. Not detected in the brain and spleen.

Precursor of the major egg-yolk proteins that are sources of nutrients during early development of oviparous organisms. The sequence is that of Vitellogenin from Acipenser transmontanus (White sturgeon).